The sequence spans 237 residues: Increased recombination centers protein 6 (237 aa).

Belongs to the IRC6 family.

Its function is as follows. Involved in gross chromosomal rearrangements (GCRs) and telomere healing. This Saccharomyces cerevisiae (strain ATCC 204508 / S288c) (Baker's yeast) protein is Increased recombination centers protein 6 (IRC6).